A 442-amino-acid chain; its full sequence is Mitochondrial inner membrane magnesium transporter MRS2 (442 aa).

The N-terminal 15 residues, 1-15 (MYFRFGKGLQIQLRH), are a transit peptide targeting the mitochondrion. The helical transmembrane segment at 308–328 (LLLFELKVTVYTLGFTVATLV) threads the bilayer. The YGMN motif lies at 332 to 335 (YGMN). Residues 344–364 (NWGFASVVGLSVAAAAVVTIT) form a helical membrane-spanning segment.

Belongs to the CorA metal ion transporter (MIT) (TC 1.A.35) family. Homopentamer. Forms homooligomers. Interacts with MFM1.

The protein localises to the mitochondrion inner membrane. High-conductance magnesium-selective channel that mediates the influx of magnesium into the mitochondrial matrix. Essential for the splicing of mRNA group II introns in mitochondria by affecting mitochondrial magnesium concentrations, which are critical for group II intron splicing. It also suppresses a variety of mitochondrial intron mutations and its absence may disturb the assembly of mitochondrial membrane complexes. The sequence is that of Mitochondrial inner membrane magnesium transporter MRS2 (MRS2) from Kluyveromyces lactis (strain ATCC 8585 / CBS 2359 / DSM 70799 / NBRC 1267 / NRRL Y-1140 / WM37) (Yeast).